Consider the following 68-residue polypeptide: DNA-directed RNA polymerase subunit omega (68 aa).

Belongs to the RNA polymerase subunit omega family. In terms of assembly, the RNAP catalytic core consists of 2 alpha, 1 beta, 1 beta' and 1 omega subunit. When a sigma factor is associated with the core the holoenzyme is formed, which can initiate transcription.

It carries out the reaction RNA(n) + a ribonucleoside 5'-triphosphate = RNA(n+1) + diphosphate. Its function is as follows. Promotes RNA polymerase assembly. Latches the N- and C-terminal regions of the beta' subunit thereby facilitating its interaction with the beta and alpha subunits. In Chromobacterium violaceum (strain ATCC 12472 / DSM 30191 / JCM 1249 / CCUG 213 / NBRC 12614 / NCIMB 9131 / NCTC 9757 / MK), this protein is DNA-directed RNA polymerase subunit omega.